Consider the following 65-residue polypeptide: Large ribosomal subunit protein bL35 (65 aa).

Residues 1-15 (MPKMKTKKSAAKRFQ) show a composition bias toward basic residues. A disordered region spans residues 1–26 (MPKMKTKKSAAKRFQVRGSGSIKRGQ).

This sequence belongs to the bacterial ribosomal protein bL35 family.

The protein is Large ribosomal subunit protein bL35 of Bordetella avium (strain 197N).